The sequence spans 473 residues: 6-phospho-beta-glucosidase (473 aa).

Catalysis depends on Glu-174, which acts as the Proton donor. Glu-366 functions as the Nucleophile in the catalytic mechanism.

Belongs to the glycosyl hydrolase 1 family.

The enzyme catalyses 6-phospho-beta-D-glucosyl-(1-&gt;4)-D-glucose + H2O = D-glucose 6-phosphate + D-glucose. This is 6-phospho-beta-glucosidase (abgA) from Clostridium longisporum.